Reading from the N-terminus, the 292-residue chain is Protein SETSIP (292 aa).

Residues 1 to 11 (MAPKRQSPLPL) are compositionally biased toward low complexity. Disordered stretches follow at residues 1–43 (MAPK…EQQE) and 158–292 (LNES…GEDD). Positions 35 to 78 (KKGEKEQQEAIEHIDEVQNEIDRLNEQDSEEILKVEQKYNKLRQ) form a coiled coil. Positions 237–292 (DMDDEEGGEDDDDDDDDGDEGEEELEDIDEGDEDEGEEDEDDDEGEEGEEDEGEDD) are enriched in acidic residues.

It belongs to the nucleosome assembly protein (NAP) family. In terms of tissue distribution, expressed in endothelial cell (EC) and protein-induced pluripotent stem (PiPS) endothelial cell (EC) (at protein level).

It localises to the cytoplasm. The protein localises to the nucleus. Its function is as follows. Plays a role as a transcriptional activator involved in the early stage of somatic cell reprogramming. Promotes the differentiation of protein-induced pluripotent stem (PiPS) cells into endothelial cells and the formation of vascular-like tubes (in vitro). Involved in the transcription induction of vascular endothelial-cadherin (VE-cadherin) expression. Associates to the VE-cadherin gene promoter. The polypeptide is Protein SETSIP (SETSIP) (Homo sapiens (Human)).